A 316-amino-acid chain; its full sequence is MIKLGIVMDPISSINIKKDTSFAMLLEAQRRSWELHYMEMSDLYLHQGEARARTRLLQVENHPQQWYQFDREQDLALETLDVILMRKDPPFDTEYIYATYILERAEEKGTLIVNKPQSLRDCNEKLFTAWFPELTPDTLVTRNAAHLREFHQKHGDVIFKPLDGMGGASIFRLKKDDPNVGVIIETLTEHGNRFCMAQNFLPAIKEGDKRVLIVDGEPVPYCLARIPAQGETRGNLAAGGRGEARPLSESDWAIARAVAPTLQEKGLIFVGLDIIGDKLTEINVTSPTCAREIEAAFPDISITGMLMNAIEERLEK.

Residues lysine 125–glutamate 311 enclose the ATP-grasp domain. Residue histidine 151–glycine 207 participates in ATP binding. Mg(2+) contacts are provided by glutamate 281 and asparagine 283.

This sequence belongs to the prokaryotic GSH synthase family. It depends on Mg(2+) as a cofactor. The cofactor is Mn(2+).

It catalyses the reaction gamma-L-glutamyl-L-cysteine + glycine + ATP = glutathione + ADP + phosphate + H(+). The protein operates within sulfur metabolism; glutathione biosynthesis; glutathione from L-cysteine and L-glutamate: step 2/2. The polypeptide is Glutathione synthetase (Photorhabdus laumondii subsp. laumondii (strain DSM 15139 / CIP 105565 / TT01) (Photorhabdus luminescens subsp. laumondii)).